The following is a 214-amino-acid chain: NADH-quinone oxidoreductase subunit C (214 aa).

This sequence belongs to the complex I 30 kDa subunit family. In terms of assembly, NDH-1 is composed of 14 different subunits. Subunits NuoB, C, D, E, F, and G constitute the peripheral sector of the complex.

Its subcellular location is the cell inner membrane. The catalysed reaction is a quinone + NADH + 5 H(+)(in) = a quinol + NAD(+) + 4 H(+)(out). In terms of biological role, NDH-1 shuttles electrons from NADH, via FMN and iron-sulfur (Fe-S) centers, to quinones in the respiratory chain. The immediate electron acceptor for the enzyme in this species is believed to be ubiquinone. Couples the redox reaction to proton translocation (for every two electrons transferred, four hydrogen ions are translocated across the cytoplasmic membrane), and thus conserves the redox energy in a proton gradient. The chain is NADH-quinone oxidoreductase subunit C from Francisella tularensis subsp. holarctica (strain LVS).